Here is a 131-residue protein sequence, read N- to C-terminus: UPF0292 protein PF1724 (131 aa).

The Toprim domain maps to 20–103 (KGVIIVEGKR…ETRRELQFIA (84 aa)). Residues E26, D69, and D71 each coordinate Mg(2+).

The protein belongs to the UPF0292 family. The cofactor is Mg(2+).

The sequence is that of UPF0292 protein PF1724 from Pyrococcus furiosus (strain ATCC 43587 / DSM 3638 / JCM 8422 / Vc1).